The sequence spans 116 residues: NADPH-dependent 7-cyano-7-deazaguanine reductase (116 aa).

Cysteine 31 functions as the Thioimide intermediate in the catalytic mechanism. Aspartate 38 (proton donor) is an active-site residue. Substrate is bound by residues valine 53–leucine 55 and tyrosine 72–glutamate 73.

It belongs to the GTP cyclohydrolase I family. QueF type 1 subfamily.

The protein localises to the cytoplasm. The enzyme catalyses 7-aminomethyl-7-carbaguanine + 2 NADP(+) = 7-cyano-7-deazaguanine + 2 NADPH + 3 H(+). The protein operates within tRNA modification; tRNA-queuosine biosynthesis. Catalyzes the NADPH-dependent reduction of 7-cyano-7-deazaguanine (preQ0) to 7-aminomethyl-7-deazaguanine (preQ1). This Chlorobium phaeobacteroides (strain DSM 266 / SMG 266 / 2430) protein is NADPH-dependent 7-cyano-7-deazaguanine reductase.